The chain runs to 368 residues: Phosphoserine aminotransferase (368 aa).

L-glutamate is bound at residue R44. Residues 78-79 (AT), W104, T157, D179, and Q202 each bind pyridoxal 5'-phosphate. The residue at position 203 (K203) is an N6-(pyridoxal phosphate)lysine. Pyridoxal 5'-phosphate is bound at residue 244-245 (NT).

This sequence belongs to the class-V pyridoxal-phosphate-dependent aminotransferase family. SerC subfamily. As to quaternary structure, homodimer. Requires pyridoxal 5'-phosphate as cofactor.

The protein localises to the cytoplasm. It catalyses the reaction O-phospho-L-serine + 2-oxoglutarate = 3-phosphooxypyruvate + L-glutamate. It carries out the reaction 4-(phosphooxy)-L-threonine + 2-oxoglutarate = (R)-3-hydroxy-2-oxo-4-phosphooxybutanoate + L-glutamate. It functions in the pathway amino-acid biosynthesis; L-serine biosynthesis; L-serine from 3-phospho-D-glycerate: step 2/3. The protein operates within cofactor biosynthesis; pyridoxine 5'-phosphate biosynthesis; pyridoxine 5'-phosphate from D-erythrose 4-phosphate: step 3/5. Its function is as follows. Catalyzes the reversible conversion of 3-phosphohydroxypyruvate to phosphoserine and of 3-hydroxy-2-oxo-4-phosphonooxybutanoate to phosphohydroxythreonine. The polypeptide is Phosphoserine aminotransferase (Neisseria meningitidis serogroup A / serotype 4A (strain DSM 15465 / Z2491)).